Reading from the N-terminus, the 152-residue chain is Sec-independent protein translocase protein TatB (152 aa).

Residues 1–21 traverse the membrane as a helical segment; sequence MFDLGWSELLVIGVVALIVVG.

The protein belongs to the TatB family. In terms of assembly, the Tat system comprises two distinct complexes: a TatABC complex, containing multiple copies of TatA, TatB and TatC subunits, and a separate TatA complex, containing only TatA subunits. Substrates initially bind to the TatABC complex, which probably triggers association of the separate TatA complex to form the active translocon.

It is found in the cell inner membrane. In terms of biological role, part of the twin-arginine translocation (Tat) system that transports large folded proteins containing a characteristic twin-arginine motif in their signal peptide across membranes. Together with TatC, TatB is part of a receptor directly interacting with Tat signal peptides. TatB may form an oligomeric binding site that transiently accommodates folded Tat precursor proteins before their translocation. This chain is Sec-independent protein translocase protein TatB, found in Ruegeria pomeroyi (strain ATCC 700808 / DSM 15171 / DSS-3) (Silicibacter pomeroyi).